The following is a 538-amino-acid chain: AAA ATPase forming ring-shaped complexes (538 aa).

Residues 14–54 are a coiled coil; sequence ARELRLANHRLGAQNEKLTEALKASREKLAEINSRLADMAE. An ATP-binding site is contributed by 240-245; that stretch reads GNGKTL.

Belongs to the AAA ATPase family. As to quaternary structure, homohexamer. Assembles into a hexameric ring structure.

This chain is AAA ATPase forming ring-shaped complexes, found in Corynebacterium urealyticum (strain ATCC 43042 / DSM 7109).